A 287-amino-acid polypeptide reads, in one-letter code: Probable ketose 3-epimerase (287 aa).

Glu152 acts as the Proton donor/acceptor in catalysis. Residues Glu152 and Asp185 each coordinate Mn(2+). His188 lines the substrate pocket. A Mn(2+)-binding site is contributed by His211. Residue Arg217 participates in substrate binding. The active-site Proton donor/acceptor is the Glu246. Mn(2+) is bound at residue Glu246.

It belongs to the hyi family. Mn(2+) serves as cofactor.

Functionally, probably catalyzes the epimerization of ketopentoses and/or ketohexoses at the C3 position. The chain is Probable ketose 3-epimerase from Synechocystis sp. (strain ATCC 27184 / PCC 6803 / Kazusa).